We begin with the raw amino-acid sequence, 192 residues long: Archaemetzincin (192 aa).

His-137 is a Zn(2+) binding site. The active-site Proton acceptor is Glu-138. 6 residues coordinate Zn(2+): His-141, His-147, Cys-148, Cys-153, Cys-172, and Cys-175.

This sequence belongs to the peptidase M54 family. In terms of assembly, monomer. Zn(2+) serves as cofactor.

In terms of biological role, probable zinc metalloprotease whose natural substrate is unknown. This is Archaemetzincin from Pyrococcus furiosus (strain ATCC 43587 / DSM 3638 / JCM 8422 / Vc1).